The chain runs to 389 residues: Large envelope protein (389 aa).

Position 1 is an N-acetylmethionine (M1). A lipid anchor (N-myristoyl glycine; by host) is attached at G2. The pre-S1 stretch occupies residues 2-108 (GQNLSTSNPL…PPLRTTHPQA (107 aa)). Positions 2-163 (GQNLSTSNPL…FSRIGDPALN (162 aa)) are pre-S. At 2-170 (GQNLSTSNPL…ALNMENITSG (169 aa)) the chain is on the virion surface; in external conformation side. Residues 2-242 (GQNLSTSNPL…PGYRWMCLRR (241 aa)) are Intravirion; in internal conformation-facing. The disordered stretch occupies residues 76–102 (TLPANPPPASTNRQSGRQPTPLSPPLR). Positions 85–95 (STNRQSGRQPT) are enriched in polar residues. The interval 109 to 163 (MHWNSTTFHQTLQDPRVRGLYFPAGGSSSGTVNPVPTTTSPISSIFSRIGDPALN) is pre-S2. Residues 171–191 (FLGPLLVLQAGFFLLTRILTI) traverse the membrane as a helical segment. The Intravirion; in external conformation segment spans residues 192-242 (PQSLDSWWTSLNFLGGTTVCLGQNSQSPISNHSPTSCPPTCPGYRWMCLRR). The helical transmembrane segment at 243–263 (FIIFLFILLLCLIFLLVLLDY) threads the bilayer. Residues 264 to 337 (QGMLPVCPLI…WASARFSWLS (74 aa)) are Virion surface-facing. N309 carries N-linked (GlcNAc...) asparagine; by host glycosylation. A helical membrane pass occupies residues 338–358 (LLVPFVQWFVGLSPIVWLSVI). Topologically, residues 359-364 (WMMWYW) are intravirion. A helical transmembrane segment spans residues 365–387 (GPSLYSILSPFLPLLPIFFCLWA). Over 388–389 (YI) the chain is Virion surface.

It belongs to the orthohepadnavirus major surface antigen family. In its internal form (Li-HBsAg), interacts with the capsid protein and with the isoform S. Interacts with host chaperone CANX. In terms of assembly, associates with host chaperone CANX through its pre-S2 N glycan; this association may be essential for isoform M proper secretion. As to quaternary structure, interacts with isoform L. Interacts with the antigens of satellite virus HDV (HDVAgs); this interaction is required for encapsidation of HDV genomic RNA. In terms of processing, isoform M is N-terminally acetylated by host at a ratio of 90%, and N-glycosylated by host at the pre-S2 region. Post-translationally, myristoylated.

Its subcellular location is the virion membrane. The large envelope protein exists in two topological conformations, one which is termed 'external' or Le-HBsAg and the other 'internal' or Li-HBsAg. In its external conformation the protein attaches the virus to cell receptors and thereby initiating infection. This interaction determines the species specificity and liver tropism. This attachment induces virion internalization predominantly through caveolin-mediated endocytosis. The large envelope protein also assures fusion between virion membrane and endosomal membrane. In its internal conformation the protein plays a role in virion morphogenesis and mediates the contact with the nucleocapsid like a matrix protein. Its function is as follows. The middle envelope protein plays an important role in the budding of the virion. It is involved in the induction of budding in a nucleocapsid independent way. In this process the majority of envelope proteins bud to form subviral lipoprotein particles of 22 nm of diameter that do not contain a nucleocapsid. In Hepatitis B virus genotype D subtype adw (isolate United Kingdom/adyw/1979) (HBV-D), this protein is Large envelope protein.